The sequence spans 137 residues: Probable 4-amino-4-deoxy-L-arabinose-phosphoundecaprenol flippase subunit ArnF (137 aa).

The next 3 helical transmembrane spans lie at Ala-43 to Leu-63, Tyr-74 to Phe-94, and Phe-98 to Leu-118.

It belongs to the ArnF family. In terms of assembly, heterodimer of ArnE and ArnF.

The protein localises to the cell inner membrane. It participates in bacterial outer membrane biogenesis; lipopolysaccharide biosynthesis. Its function is as follows. Translocates 4-amino-4-deoxy-L-arabinose-phosphoundecaprenol (alpha-L-Ara4N-phosphoundecaprenol) from the cytoplasmic to the periplasmic side of the inner membrane. The chain is Probable 4-amino-4-deoxy-L-arabinose-phosphoundecaprenol flippase subunit ArnF from Pseudomonas savastanoi pv. phaseolicola (strain 1448A / Race 6) (Pseudomonas syringae pv. phaseolicola (strain 1448A / Race 6)).